The following is an 839-amino-acid chain: MKYNANTSNQFRAMFFKNATFLKRQKCSLGVQIAIPMALVIVLVILKLWIESQIENNSGPVGDSSGDDIMGSYISYKFDYMQGWFYTINPNNITNIGYKDGYGNGTGLLGGINQYEIYWNGSDLWVPYTVAVESGQKMNDMVLAQKQQLGQSSMGPLTFPIAGIQFNEFNPQNNLIDLTITCEQQIRYAYNNFENNLIYVLSQIQTSFINYLLNGNGVVVKTQISTLPYIYKSQQFDIASLLGGSFFPFALSFVLPLFMYSIVYEKQEKLRDLSLMMGLKMRNYWIMTFIFNFLTYVVIVSVISLICSAAKVSLFVKGSPFALFLLLFLWGLSMVSFAFFLSTFFKRTRAASIFGYFFVMVMVNLNSTLSLFNTSVPVFYYWVPILAFSRGISTLCGLCGNGLCPPLSQYTWDFELSRILFWLFIDTIVYLTLAVYLDKVLPREFGVPSHPLFFIKDLKELFSKKGKYRKLRDGDGINEKTKLINEYTIDGINNDDDDDGLMDEDVKKERDMIVKGEYNPEEMTLIVQGLRKQFPGRPKPALSNLYLSVKKGEVLGYLGPNGAGKTTSISILTGLYTPTSGTAHIAGLDIRYDMDKIHQVIGVVMQFDVLWEDLTCEETILYYTRLKGTPKSIEFESTHNILKEVNLLDVKDRFVKELSGGMKRRLSFAIAMTGESSIIFLDEPTTGLSIETRKDLWGTINELKKNRSIILTTHSMQEADILSDRIAIVSQGKLQCIGTQTHLKQKFGDGYSVRIDIQEDYQNTHNPTDLIKSFSPSATLSETFNGSYVYRLPKDSIISDLYEYLVLNKEQYHLQEWSLSQTSLEDVFLKISANDDTVN.

A run of 7 helical transmembrane segments spans residues 30-50 (GVQI…KLWI), 238-258 (IASL…LPLF), 286-306 (IMTF…ISLI), 321-341 (FALF…AFFL), 352-372 (SIFG…LSLF), 378-398 (VFYY…LCGL), and 419-439 (ILFW…YLDK). The region spanning 525-756 (LIVQGLRKQF…FGDGYSVRID (232 aa)) is the ABC transporter domain. An ATP-binding site is contributed by 559-566 (GPNGAGKT).

The protein belongs to the ABC transporter superfamily. ABCA family.

The protein resides in the membrane. This Dictyostelium discoideum (Social amoeba) protein is ABC transporter A family member 7 (abcA7).